The sequence spans 958 residues: Isoleucine--tRNA ligase (958 aa).

Residues 1–32 (MSDNQNKPGKPAAKPQSKYPVNMTDTPFPMRG) are disordered. Residues 71–81 (PYANGDIHLGH) carry the 'HIGH' region motif. An L-isoleucyl-5'-AMP-binding site is contributed by E590. The 'KMSKS' region motif lies at 631–635 (KMSKS). Residue K634 participates in ATP binding. Positions 921, 924, 941, and 944 each coordinate Zn(2+).

It belongs to the class-I aminoacyl-tRNA synthetase family. IleS type 1 subfamily. Monomer. Requires Zn(2+) as cofactor.

It localises to the cytoplasm. It catalyses the reaction tRNA(Ile) + L-isoleucine + ATP = L-isoleucyl-tRNA(Ile) + AMP + diphosphate. Its function is as follows. Catalyzes the attachment of isoleucine to tRNA(Ile). As IleRS can inadvertently accommodate and process structurally similar amino acids such as valine, to avoid such errors it has two additional distinct tRNA(Ile)-dependent editing activities. One activity is designated as 'pretransfer' editing and involves the hydrolysis of activated Val-AMP. The other activity is designated 'posttransfer' editing and involves deacylation of mischarged Val-tRNA(Ile). The sequence is that of Isoleucine--tRNA ligase from Janthinobacterium sp. (strain Marseille) (Minibacterium massiliensis).